Consider the following 213-residue polypeptide: Transcription antitermination protein NusB (213 aa).

Belongs to the NusB family.

Involved in transcription antitermination. Required for transcription of ribosomal RNA (rRNA) genes. Binds specifically to the boxA antiterminator sequence of the ribosomal RNA (rrn) operons. The polypeptide is Transcription antitermination protein NusB (Nostoc punctiforme (strain ATCC 29133 / PCC 73102)).